Consider the following 200-residue polypeptide: Sorting nexin-10 (200 aa).

The segment at 8 to 125 is required for interaction with ATP6V1D; sequence EEFVSVWVRD…SLHLFLQSHL (118 aa). The 118-residue stretch at 10–127 folds into the PX domain; that stretch reads FVSVWVRDPR…HLFLQSHLNS (118 aa). 3 residues coordinate a 1,2-diacyl-sn-glycero-3-phospho-(1D-myo-inositol-3-phosphate): Arg-53, Lys-79, and Arg-94. Over residues 156–167 the composition is skewed to basic and acidic residues; the sequence is FPEEEEGKKEND. The segment at 156–200 is disordered; sequence FPEEEEGKKENDIDYDSESSSSGFGHSSDDSSSHGCKMSTAPQES.

Belongs to the sorting nexin family. As to quaternary structure, interacts with ATP6V1D; may play a role in ciliogenesis.

The protein resides in the cytoplasm. Its subcellular location is the endosome membrane. The protein localises to the cytoskeleton. It is found in the microtubule organizing center. It localises to the centrosome. Its function is as follows. Probable phosphoinositide-binding protein involved in protein sorting and membrane trafficking in endosomes. Plays a role in cilium biogenesis through regulation of the transport and the localization of proteins to the cilium. Required for the localization to the cilium of V-ATPase subunit ATP6V1D and ATP6V0D1, and RAB8A. Involved in osteoclast differentiation and therefore bone resorption. In Bos taurus (Bovine), this protein is Sorting nexin-10 (SNX10).